The following is a 104-amino-acid chain: Naphthalene 1,2-dioxygenase system, ferredoxin component (104 aa).

Positions 6–101 (IEAVALSDIL…VKIENLRVMI (96 aa)) constitute a Rieske domain. The [2Fe-2S] cluster site is built by C45, H47, C64, and H67.

Belongs to the bacterial ring-hydroxylating dioxygenase ferredoxin component family. As to quaternary structure, the naphthalene dioxygenase (NDO) multicomponent enzyme system is composed of an electron transfer component and a dioxygenase component (iron sulfur protein (ISP)). The electron transfer component is composed of a ferredoxin reductase (NdoR) and a ferredoxin (NdoA), and the dioxygenase component is formed of a heterohexamer (trimer of heterodimers) of three large alpha subunits (NdoB) and three small beta subunits (NdoC). It depends on [2Fe-2S] cluster as a cofactor.

It functions in the pathway aromatic compound metabolism; naphthalene degradation. Its function is as follows. Component of the naphthalene dioxygenase (NDO) multicomponent enzyme system which catalyzes the incorporation of both atoms of molecular oxygen into naphthalene to form cis-(1R,2S)-dihydroxy-1,2-dihydronaphthalene. Functions as an intermediate electron transfer protein via a specific interaction with iron sulfur protein components (ISP) (NdoB and NdoC). Also able to catalyze the cis-dihydroxylation of biphenyl and phenanthrene. The polypeptide is Naphthalene 1,2-dioxygenase system, ferredoxin component (Pseudomonas putida (Arthrobacter siderocapsulatus)).